The primary structure comprises 1412 residues: Protein MODIFIER OF SNC1 1 (1412 aa).

6 disordered regions span residues 1–276, 384–437, 472–798, 827–888, 909–1144, and 1156–1412; these read MTSS…QSYP, GYGS…TQRP, QQMQ…KQKQ, NEGV…DESI, DIKV…WNDG, and AEEM…GDRN. Over residues 56–103 the composition is skewed to polar residues; the sequence is SWGSKSSLNAWGTSSLSPRTESGPGSPSHLSNRPSSGGSVTRPSTADS. Residue Ser72 is modified to Phosphoserine. The span at 109 to 119 shows a compositional bias: low complexity; sequence SSSSVAWDSNS. A compositionally biased stretch (polar residues) spans 120-135; the sequence is RPSSASGVFPSNQPSV. 2 stretches are compositionally biased toward basic and acidic residues: residues 197-207 and 236-267; these read AEKDTSEKSTR and ANDRIGDANSWRRENQPYSEDAPRHCREEGQL. Over residues 478-488 the composition is skewed to basic and acidic residues; the sequence is RNERREIRNDA. 4 stretches are compositionally biased toward polar residues: residues 517 to 531, 539 to 553, 565 to 581, and 610 to 639; these read KTRTNDGWQNSSSVV, QPRTLNSGNSANKVS, SKNSSHYNQGDSATNKN, and RIVNSEGNDAWQKTTVMSGSSHTTLATNTE. Residues 665-713 show a composition bias toward basic and acidic residues; the sequence is DPKDNQRSTMRELARQRAQQRQKEEEERARDQRAKALAKLEELNRRSQI. Residues 667 to 717 adopt a coiled-coil conformation; that stretch reads KDNQRSTMRELARQRAQQRQKEEEERARDQRAKALAKLEELNRRSQIYEEG. Polar residues-rich tracts occupy residues 738-749, 756-779, and 829-847; these read GSHSSNATNSVE, KNTTQNTRTSTEYANNVGPSQQDN, and GVSSNNSDMPATSTVSAES. Residues 850-862 are compositionally biased toward basic residues; that stretch reads PKRKNNRNGKKKH. The segment covering 877–888 has biased composition (basic and acidic residues); sequence VGKETKSGDESI. At Ser883 the chain carries Phosphoserine. Composition is skewed to polar residues over residues 914–938 and 983–1003; these read GDSSEQISSFTNEESQNRAKNNWKS and QTTVPEFGTSSKSQHQGQTSS. Basic and acidic residues predominate over residues 1006–1023; that stretch reads KRVEIERYVPKPIVKEMA. The segment covering 1056-1070 has biased composition (polar residues); it reads LQPSGSTAGKSGSPS. Residues 1071–1084 are compositionally biased toward basic residues; it reads KSRHGNGRQGKHGR. A compositionally biased stretch (polar residues) spans 1106 to 1137; that stretch reads FVTSNQPIRGTVNYHSSKQTEQIAAKDQTTCN. Composition is skewed to basic and acidic residues over residues 1191 to 1202, 1222 to 1232, and 1242 to 1251; these read DPKKGNKRDFNK, KEGRVPGDHVW, and GGRESTRDKP. 2 stretches are compositionally biased toward polar residues: residues 1266-1286 and 1293-1307; these read GFTTEQKTTSADTQAQLQNRS and VEQNPNSMFQKNTGQ. Composition is skewed to basic and acidic residues over residues 1338-1351 and 1359-1369; these read SNRDRQKQNLHYEY and YDGERSREQSK. A compositionally biased stretch (low complexity) spans 1384–1397; the sequence is QGQQRQGGYQQQRG. Positions 1400-1412 are enriched in gly residues; sequence GRNGGHGFTGDRN.

As to quaternary structure, interacts with TCP14 and TCP15.

In terms of biological role, involved in the regulation of the chromatin structure and DNA methylation at the SNC1 locus. Regulates the expression of SNC1 at chromatin level. This chain is Protein MODIFIER OF SNC1 1 (MOS1), found in Arabidopsis thaliana (Mouse-ear cress).